Reading from the N-terminus, the 500-residue chain is NAD(P)H-quinone oxidoreductase subunit 2 A, chloroplastic (500 aa).

The next 13 membrane-spanning stretches (helical) occupy residues 14 to 34 (LLLF…GLIL), 47 to 67 (IPWF…ALLF), 89 to 109 (IFQF…VEYI), 114 to 134 (MAIT…MFLC), 139 to 159 (FITI…LSGY), 173 to 193 (YLLM…WLYG), 217 to 237 (PGIS…LSPA), 285 to 305 (WHLL…LIAI), 313 to 333 (MLAY…IVGD), 344 to 364 (YMLF…LFGL), 385 to 405 (ALSL…AGFF), 408 to 428 (LHLF…IGLL), and 474 to 494 (MIVC…IIAI).

Belongs to the complex I subunit 2 family. As to quaternary structure, NDH is composed of at least 16 different subunits, 5 of which are encoded in the nucleus.

The protein localises to the plastid. The protein resides in the chloroplast thylakoid membrane. It catalyses the reaction a plastoquinone + NADH + (n+1) H(+)(in) = a plastoquinol + NAD(+) + n H(+)(out). The enzyme catalyses a plastoquinone + NADPH + (n+1) H(+)(in) = a plastoquinol + NADP(+) + n H(+)(out). Functionally, NDH shuttles electrons from NAD(P)H:plastoquinone, via FMN and iron-sulfur (Fe-S) centers, to quinones in the photosynthetic chain and possibly in a chloroplast respiratory chain. The immediate electron acceptor for the enzyme in this species is believed to be plastoquinone. Couples the redox reaction to proton translocation, and thus conserves the redox energy in a proton gradient. This Pelargonium hortorum (Common geranium) protein is NAD(P)H-quinone oxidoreductase subunit 2 A, chloroplastic.